The chain runs to 201 residues: dTTP/UTP pyrophosphatase (201 aa).

Residue aspartate 81 is the Proton acceptor of the active site.

Belongs to the Maf family. YhdE subfamily. It depends on a divalent metal cation as a cofactor.

It is found in the cytoplasm. It catalyses the reaction dTTP + H2O = dTMP + diphosphate + H(+). The catalysed reaction is UTP + H2O = UMP + diphosphate + H(+). Nucleoside triphosphate pyrophosphatase that hydrolyzes dTTP and UTP. May have a dual role in cell division arrest and in preventing the incorporation of modified nucleotides into cellular nucleic acids. The chain is dTTP/UTP pyrophosphatase from Dechloromonas aromatica (strain RCB).